Here is a 283-residue protein sequence, read N- to C-terminus: Elongation factor Ts (283 aa).

The tract at residues 80-83 (TDFV) is involved in Mg(2+) ion dislocation from EF-Tu.

It belongs to the EF-Ts family.

It is found in the cytoplasm. Functionally, associates with the EF-Tu.GDP complex and induces the exchange of GDP to GTP. It remains bound to the aminoacyl-tRNA.EF-Tu.GTP complex up to the GTP hydrolysis stage on the ribosome. The polypeptide is Elongation factor Ts (Enterobacter sp. (strain 638)).